The primary structure comprises 367 residues: Flagellar P-ring protein (367 aa).

The signal sequence occupies residues 1–22 (MRRMLVIRWILAIHLIATQVFA).

Belongs to the FlgI family. As to quaternary structure, the basal body constitutes a major portion of the flagellar organelle and consists of four rings (L,P,S, and M) mounted on a central rod.

It is found in the periplasm. The protein resides in the bacterial flagellum basal body. In terms of biological role, assembles around the rod to form the L-ring and probably protects the motor/basal body from shearing forces during rotation. The chain is Flagellar P-ring protein from Legionella pneumophila (strain Corby).